The primary structure comprises 245 residues: MFSFNLLTIVSSIVNLLALAWIIKRYFLGAIIRIMNERREKIEAAMKEAEKKLQEAEDLRKQREAQLAQARDEAAKIIKEAVDTAEKMKRDITAKAEEEAEKIIVKAHEIATAERKRVLETAKKEVLAFSRLIIKEFFKRFLPVEAEELLISQFAESLDSAIANIKSDNIEEVKFISPDNVSSQLKKKIEDKLRSLLPGNWKFIFDVDPSIGLGFKLFIGEFLIDHSLDYHLSQIYETIREVENI.

Residues 3 to 23 form a helical membrane-spanning segment; the sequence is SFNLLTIVSSIVNLLALAWII.

The protein belongs to the ATPase B chain family. As to quaternary structure, F-type ATPases have 2 components, F(1) - the catalytic core - and F(0) - the membrane proton channel. F(1) has five subunits: alpha(3), beta(3), gamma(1), delta(1), epsilon(1). F(0) has three main subunits: a(1), b(2) and c(10-14). The alpha and beta chains form an alternating ring which encloses part of the gamma chain. F(1) is attached to F(0) by a central stalk formed by the gamma and epsilon chains, while a peripheral stalk is formed by the delta and b chains.

The protein localises to the cell inner membrane. In terms of biological role, f(1)F(0) ATP synthase produces ATP from ADP in the presence of a proton or sodium gradient. F-type ATPases consist of two structural domains, F(1) containing the extramembraneous catalytic core and F(0) containing the membrane proton channel, linked together by a central stalk and a peripheral stalk. During catalysis, ATP synthesis in the catalytic domain of F(1) is coupled via a rotary mechanism of the central stalk subunits to proton translocation. Component of the F(0) channel, it forms part of the peripheral stalk, linking F(1) to F(0). This chain is ATP synthase subunit b, found in Dictyoglomus thermophilum (strain ATCC 35947 / DSM 3960 / H-6-12).